Here is a 52-residue protein sequence, read N- to C-terminus: Mitogenic lectin alpha chain (52 aa).

It belongs to the leguminous lectin family. In terms of assembly, tetramer of two alpha and two beta chains.

This chain is Mitogenic lectin alpha chain, found in Vicia sativa (Spring vetch).